Here is a 113-residue protein sequence, read N- to C-terminus: Hydrogenase maturation factor HypA (113 aa).

Histidine 2 contributes to the Ni(2+) binding site. Residues cysteine 70, cysteine 73, cysteine 86, and cysteine 88 each coordinate Zn(2+).

It belongs to the HypA/HybF family.

Its function is as follows. Involved in the maturation of [NiFe] hydrogenases. Required for nickel insertion into the metal center of the hydrogenase. The sequence is that of Hydrogenase maturation factor HypA from Nostoc sp. (strain PCC 7120 / SAG 25.82 / UTEX 2576).